A 453-amino-acid chain; its full sequence is Ribosomal protein uS12 methylthiotransferase RimO (453 aa).

One can recognise an MTTase N-terminal domain in the interval 6–116; the sequence is PKVGFVSLGC…VMEAVHEALP (111 aa). Positions 15, 51, 80, 147, 151, and 154 each coordinate [4Fe-4S] cluster. In terms of domain architecture, Radical SAM core spans 133 to 370; that stretch reads LTPRHYAYLK…MEKQAQISAA (238 aa). Residues 373–441 enclose the TRAM domain; it reads EAKIGTVQQC…DHDLYGDALP (69 aa).

It belongs to the methylthiotransferase family. RimO subfamily. [4Fe-4S] cluster is required as a cofactor.

The protein localises to the cytoplasm. It catalyses the reaction L-aspartate(89)-[ribosomal protein uS12]-hydrogen + (sulfur carrier)-SH + AH2 + 2 S-adenosyl-L-methionine = 3-methylsulfanyl-L-aspartate(89)-[ribosomal protein uS12]-hydrogen + (sulfur carrier)-H + 5'-deoxyadenosine + L-methionine + A + S-adenosyl-L-homocysteine + 2 H(+). Functionally, catalyzes the methylthiolation of an aspartic acid residue of ribosomal protein uS12. The sequence is that of Ribosomal protein uS12 methylthiotransferase RimO from Stenotrophomonas maltophilia (strain R551-3).